The primary structure comprises 614 residues: Aspartate--tRNA ligase (614 aa).

Glu-174 provides a ligand contact to L-aspartate. Residues 198–201 (QLFK) are aspartate. Residue Arg-220 coordinates L-aspartate. ATP is bound by residues 220 to 222 (RDE) and Gln-229. His-448 is a binding site for L-aspartate. Glu-482 contacts ATP. Arg-489 is a binding site for L-aspartate. 534–537 (GLDR) serves as a coordination point for ATP.

The protein belongs to the class-II aminoacyl-tRNA synthetase family. Type 1 subfamily. As to quaternary structure, homodimer.

It is found in the cytoplasm. It catalyses the reaction tRNA(Asp) + L-aspartate + ATP = L-aspartyl-tRNA(Asp) + AMP + diphosphate. Its function is as follows. Catalyzes the attachment of L-aspartate to tRNA(Asp) in a two-step reaction: L-aspartate is first activated by ATP to form Asp-AMP and then transferred to the acceptor end of tRNA(Asp). This chain is Aspartate--tRNA ligase, found in Lactobacillus acidophilus (strain ATCC 700396 / NCK56 / N2 / NCFM).